The chain runs to 907 residues: Protein translocase subunit SecA (907 aa).

ATP-binding positions include glutamine 87, 105–109, and aspartate 510; that span reads GEGKT. Positions 892, 894, 903, and 904 each coordinate Zn(2+).

Belongs to the SecA family. In terms of assembly, monomer and homodimer. Part of the essential Sec protein translocation apparatus which comprises SecA, SecYEG and auxiliary proteins SecDF-YajC and YidC. Zn(2+) serves as cofactor.

Its subcellular location is the cell inner membrane. The protein resides in the cytoplasm. It carries out the reaction ATP + H2O + cellular proteinSide 1 = ADP + phosphate + cellular proteinSide 2.. In terms of biological role, part of the Sec protein translocase complex. Interacts with the SecYEG preprotein conducting channel. Has a central role in coupling the hydrolysis of ATP to the transfer of proteins into and across the cell membrane, serving both as a receptor for the preprotein-SecB complex and as an ATP-driven molecular motor driving the stepwise translocation of polypeptide chains across the membrane. The sequence is that of Protein translocase subunit SecA from Acinetobacter baumannii (strain AB0057).